A 179-amino-acid polypeptide reads, in one-letter code: Large ribosomal subunit protein uL6 (179 aa).

This sequence belongs to the universal ribosomal protein uL6 family. Part of the 50S ribosomal subunit.

This protein binds to the 23S rRNA, and is important in its secondary structure. It is located near the subunit interface in the base of the L7/L12 stalk, and near the tRNA binding site of the peptidyltransferase center. This is Large ribosomal subunit protein uL6 from Mycobacteroides abscessus (strain ATCC 19977 / DSM 44196 / CCUG 20993 / CIP 104536 / JCM 13569 / NCTC 13031 / TMC 1543 / L948) (Mycobacterium abscessus).